Consider the following 259-residue polypeptide: Nodulation protein J (259 aa).

Residues 30-256 (ASILGNLADP…LVSTALLRRR (227 aa)) enclose the ABC transmembrane type-2 domain. A run of 6 helical transmembrane segments spans residues 32 to 52 (ILGN…GLGV), 64 to 84 (AFLA…FETI), 116 to 136 (AWAA…AAML), 141 to 161 (WLAL…FASL), 174 to 194 (YFIF…GAVF), and 228 to 248 (IANV…PFLV).

This sequence belongs to the ABC-2 integral membrane protein family. Lipooligosaccharide exporter (TC 3.A.1.102) subfamily. The complex is composed of two ATP-binding proteins (NodI) and two transmembrane proteins (NodJ).

The protein resides in the cell inner membrane. In terms of biological role, part of the ABC transporter complex NodIJ involved in the export of the nodulation factors (Nod factors), the bacterial signal molecules that induce symbiosis and subsequent nodulation induction. Nod factors are LCO (lipo-chitin oligosaccharide), a modified beta-1,4-linked N-acetylglucosamine oligosaccharide. This subunit encodes the transporter. The sequence is that of Nodulation protein J (nodJ) from Rhizobium leguminosarum bv. viciae.